The following is a 511-amino-acid chain: MRWISRPGWPGHLLALAAGALTPLALAPFDYWPLAILSIALLYLGLRGLPARAALWRGWWYGFGAFGAGTSWIYVSIHDYGAASVPLASFLMLGFTAGVAFFFALPAWLWARCLRRDNAPLGDALAFAALWLALELFRSWFLTGFPWLYAGYSQLQGPLAGLVPVGGVWLSSFVIALSAALLVNLPRLFPHGASLLLALVLLLGPWAAGLYLKGHAWTHSAGEPLKVVAIQGNIAQELKWDPTQVRAQLDLYRDLSLPQQDVDLIVWPETAVPILKDMASGYLGAMGQVAADKKAALITGVPVRERLADGNSRYFNGITVVGEGAGTYLKQKLVPFGEYVPLQDLLRGLIAFFDLPMSDFARGPADQALLKAKGYEIAPYICYEVVYPEFAAALAAQSQVLLTVSNDTWFGTSIGPLQHLQMAQMRALESGRWMIRATNNGVTGLIDPYGRIVKQIPQFQQGILRGEVIPMQGLTPYLQYRVWPLAGLAGVLLLWALLGRRLRPQERRLFG.

A run of 6 helical transmembrane segments spans residues 7-25 (PGWPGHLLALAAGALTPLA), 58-78 (GWWYGFGAFGAGTSWIYVSIH), 90-110 (FLMLGFTAGVAFFFALPAWLW), 125-145 (LAFAALWLALELFRSWFLTGF), 163-183 (VPVGGVWLSSFVIALSAALLV), and 192-212 (GASLLLALVLLLGPWAAGLYL). The region spanning 230-470 (IQGNIAQELK…QGILRGEVIP (241 aa)) is the CN hydrolase domain. Glu-269 functions as the Proton acceptor in the catalytic mechanism. Lys-330 is an active-site residue. Cys-382 functions as the Nucleophile in the catalytic mechanism. The chain crosses the membrane as a helical span at residues 478-498 (LQYRVWPLAGLAGVLLLWALL).

This sequence belongs to the CN hydrolase family. Apolipoprotein N-acyltransferase subfamily.

It localises to the cell inner membrane. The catalysed reaction is N-terminal S-1,2-diacyl-sn-glyceryl-L-cysteinyl-[lipoprotein] + a glycerophospholipid = N-acyl-S-1,2-diacyl-sn-glyceryl-L-cysteinyl-[lipoprotein] + a 2-acyl-sn-glycero-3-phospholipid + H(+). It participates in protein modification; lipoprotein biosynthesis (N-acyl transfer). Functionally, catalyzes the phospholipid dependent N-acylation of the N-terminal cysteine of apolipoprotein, the last step in lipoprotein maturation. This is Apolipoprotein N-acyltransferase from Pseudomonas paraeruginosa (strain DSM 24068 / PA7) (Pseudomonas aeruginosa (strain PA7)).